Consider the following 223-residue polypeptide: Endonuclease V (223 aa).

D35 and D103 together coordinate Mg(2+).

This sequence belongs to the endonuclease V family. Requires Mg(2+) as cofactor.

Its subcellular location is the cytoplasm. The catalysed reaction is Endonucleolytic cleavage at apurinic or apyrimidinic sites to products with a 5'-phosphate.. DNA repair enzyme involved in the repair of deaminated bases. Selectively cleaves double-stranded DNA at the second phosphodiester bond 3' to a deoxyinosine leaving behind the intact lesion on the nicked DNA. The chain is Endonuclease V from Shigella dysenteriae serotype 1 (strain Sd197).